We begin with the raw amino-acid sequence, 284 residues long: Bifunctional protein FolD (284 aa).

Residues 166–168 (GAS), Ser191, and Ile232 each bind NADP(+).

Belongs to the tetrahydrofolate dehydrogenase/cyclohydrolase family. Homodimer.

It catalyses the reaction (6R)-5,10-methylene-5,6,7,8-tetrahydrofolate + NADP(+) = (6R)-5,10-methenyltetrahydrofolate + NADPH. The catalysed reaction is (6R)-5,10-methenyltetrahydrofolate + H2O = (6R)-10-formyltetrahydrofolate + H(+). Its pathway is one-carbon metabolism; tetrahydrofolate interconversion. Functionally, catalyzes the oxidation of 5,10-methylenetetrahydrofolate to 5,10-methenyltetrahydrofolate and then the hydrolysis of 5,10-methenyltetrahydrofolate to 10-formyltetrahydrofolate. The polypeptide is Bifunctional protein FolD (Neisseria gonorrhoeae (strain ATCC 700825 / FA 1090)).